A 350-amino-acid polypeptide reads, in one-letter code: Farnesyl pyrophosphate synthase (350 aa).

Isopentenyl diphosphate-binding residues include lysine 55, arginine 58, and glutamine 94. Positions 101 and 105 each coordinate Mg(2+). Arginine 110 contributes to the dimethylallyl diphosphate binding site. Arginine 111 contributes to the isopentenyl diphosphate binding site. Dimethylallyl diphosphate is bound by residues lysine 198, threonine 199, glutamine 237, lysine 254, and lysine 263.

The protein belongs to the FPP/GGPP synthase family. The cofactor is Mg(2+).

It is found in the cytoplasm. It catalyses the reaction isopentenyl diphosphate + dimethylallyl diphosphate = (2E)-geranyl diphosphate + diphosphate. The catalysed reaction is isopentenyl diphosphate + (2E)-geranyl diphosphate = (2E,6E)-farnesyl diphosphate + diphosphate. It participates in isoprenoid biosynthesis; farnesyl diphosphate biosynthesis; farnesyl diphosphate from geranyl diphosphate and isopentenyl diphosphate: step 1/1. The protein operates within isoprenoid biosynthesis; geranyl diphosphate biosynthesis; geranyl diphosphate from dimethylallyl diphosphate and isopentenyl diphosphate: step 1/1. In terms of biological role, catalyzes the sequential condensation of isopentenyl pyrophosphate with the allylic pyrophosphates, dimethylallyl pyrophosphate, and then with the resultant geranylpyrophosphate to the ultimate product farnesyl pyrophosphate. This is Farnesyl pyrophosphate synthase (FPS) from Zea mays (Maize).